The primary structure comprises 120 residues: Putative ankyrin repeat protein RBE_1215 (120 aa).

ANK repeat units lie at residues 22–52 (DGGN…LTNI) and 59–88 (FGDT…ITSV).

The chain is Putative ankyrin repeat protein RBE_1215 from Rickettsia bellii (strain RML369-C).